The chain runs to 397 residues: Tryptophan synthase beta chain 1 (397 aa).

Position 90 is an N6-(pyridoxal phosphate)lysine (K90).

This sequence belongs to the TrpB family. In terms of assembly, tetramer of two alpha and two beta chains. Requires pyridoxal 5'-phosphate as cofactor.

The catalysed reaction is (1S,2R)-1-C-(indol-3-yl)glycerol 3-phosphate + L-serine = D-glyceraldehyde 3-phosphate + L-tryptophan + H2O. It functions in the pathway amino-acid biosynthesis; L-tryptophan biosynthesis; L-tryptophan from chorismate: step 5/5. The beta subunit is responsible for the synthesis of L-tryptophan from indole and L-serine. The sequence is that of Tryptophan synthase beta chain 1 (trpB1) from Aquifex aeolicus (strain VF5).